The chain runs to 276 residues: UPF0328 protein ECU01_0090/ECU01_1520/ECU02_1550/ECU08_0020 (276 aa).

The interval 1–24 (MGIIDVQRSHLTATPSKERDAPAH) is disordered.

This sequence belongs to the UPF0328 family.

This is UPF0328 protein ECU01_0090/ECU01_1520/ECU02_1550/ECU08_0020 from Encephalitozoon cuniculi (strain GB-M1) (Microsporidian parasite).